Here is a 679-residue protein sequence, read N- to C-terminus: Glutamine-dependent NAD(+) synthetase (679 aa).

One can recognise a CN hydrolase domain in the interval 12–276 (VRVAACTHHT…VRRSVADVDT (265 aa)). Glu-52 (proton acceptor; for glutaminase activity) is an active-site residue. The active-site For glutaminase activity is the Lys-121. Tyr-127 contributes to the L-glutamine binding site. Cys-176 acts as the Nucleophile; for glutaminase activity in catalysis. 2 residues coordinate L-glutamine: Ser-203 and Arg-209. The segment at 337–679 (QQDCYEAYNI…DQIDREVPKG (343 aa)) is ligase. 366 to 373 (GVSGGLDS) is a binding site for ATP. Asn-456 is a binding site for deamido-NAD(+). Position 480 (Thr-480) interacts with ATP. Deamido-NAD(+) is bound by residues Glu-485, 490 to 493 (WSTY), and Lys-635. The segment at 639 to 658 (LPNGPKVSHGGALSPRGDWR) is disordered.

In the C-terminal section; belongs to the NAD synthetase family.

It catalyses the reaction deamido-NAD(+) + L-glutamine + ATP + H2O = L-glutamate + AMP + diphosphate + NAD(+) + H(+). It participates in cofactor biosynthesis; NAD(+) biosynthesis; NAD(+) from deamido-NAD(+) (L-Gln route): step 1/1. Its function is as follows. Catalyzes the ATP-dependent amidation of deamido-NAD to form NAD. Uses L-glutamine as a nitrogen source. In Mycobacterium bovis (strain ATCC BAA-935 / AF2122/97), this protein is Glutamine-dependent NAD(+) synthetase.